A 272-amino-acid polypeptide reads, in one-letter code: Adenylate kinase (272 aa).

55-60 (GAGKGT) contacts ATP. Residues 75-104 (ATGDMLRSQVAKKTPLGKEAKKIMDQGGLV) are NMP. AMP is bound by residues Thr76, Arg81, 102-104 (GLV), 131-134 (GFPR), and Gln138. The LID stretch occupies residues 172–209 (GRLVHPASGRSYHKIFNPPKQDMKDDITGEPLIQRSDD). ATP is bound by residues Arg173 and 182 to 183 (SY). Positions 206 and 217 each coordinate AMP. Position 245 (Gln245) interacts with ATP.

It belongs to the adenylate kinase family. AK2 subfamily. In terms of assembly, monomer.

Its subcellular location is the cytoplasm. It localises to the cytosol. The protein resides in the mitochondrion intermembrane space. The enzyme catalyses AMP + ATP = 2 ADP. Functionally, catalyzes the reversible transfer of the terminal phosphate group between ATP and AMP. Plays an important role in cellular energy homeostasis and in adenine nucleotide metabolism. Adenylate kinase activity is critical for regulation of the phosphate utilization and the AMP de novo biosynthesis pathways. The polypeptide is Adenylate kinase (adk1) (Talaromyces marneffei (Penicillium marneffei)).